Consider the following 488-residue polypeptide: MNLEETMPLVFERSIPGRIGFSLPESDVPETNAGDYFDQAYIRSIPADLPELSELEIMRHYTNLSNHNFGVDSGFYPLGSCTMKYNPKINEKVARFPGFANIHPNQPESSVQGALELLYDLQTSLVEITGMDEVTLQPAAGAHGEWTGLMLIRAFHEKNGDTKRTKVIIPDSAHGTNPASAAVAGFDVVTVKSNEKGLVDVADLKKVVGEDTAALMLTNPNTLGLFEKDIVEMAEIVHEAGGKLYYDGANLNAIMAKVRPGDMGFDVVHLNLHKTFTGPHGGGGPGSGPIGVKKELIPFLPTPVLTKKEDIYTFDYNYPDSIGRVKPYYGNFGINVRAYTYIRTMGPDGLKLVTEYAVLNANYMMRKLQEAYDLPFDQVCKHEFVLSGNRQKKLGVRTVDIAKRLLDHNFHPPTVYFPLIVGEAIMIEPTETESKETLDSFIDTMLKIAKEAEENPEIVQEAPHSTYVKRLDETRAARKPILRYQKEV.

Residue K274 is modified to N6-(pyridoxal phosphate)lysine.

It belongs to the GcvP family. C-terminal subunit subfamily. As to quaternary structure, the glycine cleavage system is composed of four proteins: P, T, L and H. In this organism, the P 'protein' is a heterodimer of two subunits. Requires pyridoxal 5'-phosphate as cofactor.

The catalysed reaction is N(6)-[(R)-lipoyl]-L-lysyl-[glycine-cleavage complex H protein] + glycine + H(+) = N(6)-[(R)-S(8)-aminomethyldihydrolipoyl]-L-lysyl-[glycine-cleavage complex H protein] + CO2. The glycine cleavage system catalyzes the degradation of glycine. The P protein binds the alpha-amino group of glycine through its pyridoxal phosphate cofactor; CO(2) is released and the remaining methylamine moiety is then transferred to the lipoamide cofactor of the H protein. The polypeptide is Probable glycine dehydrogenase (decarboxylating) subunit 2 (Listeria monocytogenes serovar 1/2a (strain ATCC BAA-679 / EGD-e)).